A 919-amino-acid polypeptide reads, in one-letter code: Motility hub protein FimV (919 aa).

The signal sequence occupies residues 1–24 (MVRLRTLVRAIAAASVLTSGMAHG). The segment covering 140 to 171 (ASAPQAPVSAPRATGAPRAPQAPAPVRTTAPA) has biased composition (low complexity). 2 disordered regions span residues 140-177 (ASAP…DTYR) and 237-312 (ERSP…KGDS). Positions 174–229 (DTYRTVSNDTLWEIAQRNRTDRVSVPQAMLAFQELNPGAFVDGNINRLKSGQVLRI) constitute a LysM domain. Polar residues predominate over residues 245–256 (SQVQAQNQSWRG). The segment covering 299–312 (KASKGADKGGKGDS) has biased composition (basic and acidic residues). The stretch at 319–367 (LAVTKESLDSTRRENEELQSRMQDLQSQLDKLQKLIQLKDAQLAKLQGQ) forms a coiled coil. The tract at residues 372-445 (GQGAAQPNAA…APAVPAPAPV (74 aa)) is disordered. The segment covering 390–417 (AAAQAPAQPGTPAAAAPTPAPAGEAPAA) has biased composition (low complexity). Residues 418 to 443 (PAQPPVAPPPAPAAEKPPAPAVPAPA) show a composition bias toward pro residues. A helical transmembrane segment spans residues 464 to 484 (LWLAVIGGSALLALLVLLMIL). The segment at 785-816 (AEEPALSLPDDFDLSLADEPTEPAAPEKGEDS) is disordered.

Interacts with FimL. Interacts with DgcP.

Its subcellular location is the cell inner membrane. Functionally, inner membrane hub protein that plays both cAMP-dependent and cAMP-independent roles in twitching motility. Regulates intracellular cyclic AMP (cAMP) levels through the activation of adenylate cyclase CyaB. Plays an essential role in a number of virulence mechanisms including type IV pilus (T4P)-mediated assembly and twitching motility as well as cAMP-dependent virulence gene expression. Also mediates type II secretion (T2S) of lipases and proteases. In addition, mediates the cAMP-independent localization of multiple T4P structural and regulatory components to the cell poles. This role in directing proteins to the cell pole is not restricted to type IV component and involves other proteins such as the diguanylate cyclase DgcP. This is Motility hub protein FimV (fimV) from Pseudomonas aeruginosa (strain ATCC 15692 / DSM 22644 / CIP 104116 / JCM 14847 / LMG 12228 / 1C / PRS 101 / PAO1).